The sequence spans 255 residues: Sulfate transporter CysZ (255 aa).

4 helical membrane-spanning segments follow: residues 26–46, 71–91, 150–170, and 211–231; these read LFVL…IYFA, LLWP…FTML, LFIL…WLLF, and IVYL…AAVA.

The protein belongs to the CysZ family.

The protein resides in the cell inner membrane. High affinity, high specificity proton-dependent sulfate transporter, which mediates sulfate uptake. Provides the sulfur source for the cysteine synthesis pathway. The chain is Sulfate transporter CysZ from Pseudomonas fluorescens (strain SBW25).